Consider the following 87-residue polypeptide: MNSLLIITACLFLIGTVWAKEGYLVNKSTGCKYGCLKLGENEGCDKECKAKNQGGSYGYCYAFACWCEGLPESTPTYPLPNKSCSRK.

A signal peptide spans 1 to 19 (MNSLLIITACLFLIGTVWA). Residues 20-85 (KEGYLVNKST…TYPLPNKSCS (66 aa)) enclose the LCN-type CS-alpha/beta domain. Intrachain disulfides connect Cys-31-Cys-84, Cys-35-Cys-60, Cys-44-Cys-65, and Cys-48-Cys-67.

Belongs to the long (4 C-C) scorpion toxin superfamily. Sodium channel inhibitor family. Beta subfamily. Expressed by the venom gland.

It is found in the secreted. Beta toxins bind voltage-independently at site-4 of sodium channels (Nav) and shift the voltage of activation toward more negative potentials thereby affecting sodium channel activation and promoting spontaneous and repetitive firing. Induces immediate paralysis in crickets after injection, with a total paralysis occurring within 15-30 minutes and lasting for 1-2 hours. Is also lethal to vertebrate (chicks) when injected in very high dosages (more that 100 mg/kg). The chain is Toxin CsEv2 from Centruroides sculpturatus (Arizona bark scorpion).